The primary structure comprises 183 residues: Dual-action ribosomal maturation protein DarP (183 aa).

Belongs to the DarP family.

The protein resides in the cytoplasm. In terms of biological role, member of a network of 50S ribosomal subunit biogenesis factors which assembles along the 30S-50S interface, preventing incorrect 23S rRNA structures from forming. Promotes peptidyl transferase center (PTC) maturation. This Salmonella enteritidis PT4 (strain P125109) protein is Dual-action ribosomal maturation protein DarP.